Here is a 391-residue protein sequence, read N- to C-terminus: 8-amino-7-oxononanoate synthase (391 aa).

Substrate is bound at residue arginine 19. 106 to 107 (GY) contacts pyridoxal 5'-phosphate. Histidine 131 contacts substrate. Pyridoxal 5'-phosphate contacts are provided by serine 178, histidine 206, and threonine 234. An N6-(pyridoxal phosphate)lysine modification is found at lysine 237. Threonine 353 contacts substrate.

It belongs to the class-II pyridoxal-phosphate-dependent aminotransferase family. BioF subfamily. In terms of assembly, homodimer. The cofactor is pyridoxal 5'-phosphate.

The enzyme catalyses 6-carboxyhexanoyl-[ACP] + L-alanine + H(+) = (8S)-8-amino-7-oxononanoate + holo-[ACP] + CO2. It functions in the pathway cofactor biosynthesis; biotin biosynthesis. In terms of biological role, catalyzes the decarboxylative condensation of pimeloyl-[acyl-carrier protein] and L-alanine to produce 8-amino-7-oxononanoate (AON), [acyl-carrier protein], and carbon dioxide. In Geobacter sulfurreducens (strain ATCC 51573 / DSM 12127 / PCA), this protein is 8-amino-7-oxononanoate synthase.